The primary structure comprises 285 residues: Secreted LysM effector slp2 (285 aa).

A signal peptide spans 1-16 (MLPITVVTLFAALAAA). Residues 75 to 143 (GDAAKAGDAA…KGGDAAKGGN (69 aa)) are disordered. Basic and acidic residues predominate over residues 85-116 (KGGDAKGGDAKGGDAKGGDAKGGKGGDAKGGK). Residues 117–139 (GGDAAKGGKGGDAAKGGKGGDAA) show a composition bias toward gly residues. 2 LysM domains span residues 157–201 (VEHK…VLKI) and 237–281 (FTRV…TINL).

This sequence belongs to the secreted LysM effector family.

In terms of biological role, might have a role in sequestration of chitin oligosaccharides (breakdown products of fungal cell walls that are released during invasion and act as triggers of host immunity) to dampen host defense. This is Secreted LysM effector slp2 from Pyricularia oryzae (strain 70-15 / ATCC MYA-4617 / FGSC 8958) (Rice blast fungus).